Here is a 744-residue protein sequence, read N- to C-terminus: Protein zyg-11 homolog B (744 aa).

LRR repeat units follow at residues 185–208 (LPRL…LACK), 216–236 (MHHL…VREL), and 237–261 (KHLN…LLEQ).

The protein belongs to the zyg-11 family. (Microbial infection) Interacts with SARS-COV-2 protein ORF10. In terms of assembly, interacts with ELOC/Elongin C. Part of an E3 ubiquitin ligase complex including ZYG11B, CUL2 and Elongin BC. In terms of processing, (Microbial infection) Ubiquitinated; leading to proteasomal degradation in the presence of herpes simplex virus 1/HHV-1.

It is found in the cytoplasm. Functionally, serves as substrate adapter subunit in the E3 ubiquitin ligase complex ZYG11B-CUL2-Elongin BC. Acts to target substrates bearing N-terminal degrons for proteasomal degradation with the first four residues of substrates being the key recognition elements. Prefers Nt-Gly but also has the capacity to recognize Nt-Ser, -Ala and -Cys. Involved in the clearance of proteolytic fragments generated by caspase cleavage during apoptosis since N-terminal glycine degrons are strongly enriched at caspase cleavage sites. Also important in the quality control of protein N-myristoylation in which N-terminal glycine degrons are conditionally exposed after a failure of N-myristoylation. In addition, plays a role in the amplification of cGAS to enhance innate immune response. Mechanistically, strengthens the processes of cGAS binding with dsDNA and assembling oligomers and also accelerates and stabilizes cGAS-DNA condensation, thereby enhancing production of antiviral IFNs and inflammatory cytokines. This Homo sapiens (Human) protein is Protein zyg-11 homolog B.